The primary structure comprises 799 residues: Protein-lysine N-methyltransferase SMYD4 (799 aa).

112–114 (RSA) lines the S-adenosyl-L-methionine pocket. Residues 233–570 (LSVSLCTHPL…KGQEILHCYG (338 aa)) form the SET domain. Zn(2+) contacts are provided by cysteine 296, cysteine 299, cysteine 309, cysteine 312, cysteine 318, cysteine 322, histidine 331, and cysteine 335. Residues 296–335 (CHRCLKHTLATVPCGSCSYAKYCSQECMQQAWDLYHSTEC) form an MYND-type zinc finger. Residues 535 to 536 (NH), tyrosine 569, and phenylalanine 591 contribute to the S-adenosyl-L-methionine site.

It belongs to the class V-like SAM-binding methyltransferase superfamily. Interacts (via MYND-type zinc finger) with HDAC1.

The protein localises to the nucleus. It is found in the cytoplasm. The enzyme catalyses L-lysyl-[protein] + S-adenosyl-L-methionine = N(6)-methyl-L-lysyl-[protein] + S-adenosyl-L-homocysteine + H(+). Its function is as follows. Protein-lysine N-methyltransferase. Monomethylates PRMT5, modulating its transcriptional activity. May also act as a histone methyltransferase. Plays a critical role in cardiac development. Acts as a key epigenetic regulator of gene expression during cardiac development via its dual activities as a methyltransferase and negative regulator of HDAC1. In Mus musculus (Mouse), this protein is Protein-lysine N-methyltransferase SMYD4 (Smyd4).